The primary structure comprises 650 residues: Acetyl-coenzyme A synthetase (650 aa).

CoA is bound by residues 191–194 (RGGR), threonine 311, and asparagine 335. ATP-binding positions include 387–389 (GEP), 411–416 (DTWWQT), aspartate 501, and arginine 516. CoA is bound at residue serine 524. Arginine 527 is an ATP binding site. 3 residues coordinate Mg(2+): valine 538, histidine 540, and isoleucine 543. Residue arginine 585 coordinates CoA. Lysine 610 carries the post-translational modification N6-acetyllysine.

It belongs to the ATP-dependent AMP-binding enzyme family. Requires Mg(2+) as cofactor. Post-translationally, acetylated. Deacetylation by the SIR2-homolog deacetylase activates the enzyme.

The enzyme catalyses acetate + ATP + CoA = acetyl-CoA + AMP + diphosphate. Its function is as follows. Catalyzes the conversion of acetate into acetyl-CoA (AcCoA), an essential intermediate at the junction of anabolic and catabolic pathways. AcsA undergoes a two-step reaction. In the first half reaction, AcsA combines acetate with ATP to form acetyl-adenylate (AcAMP) intermediate. In the second half reaction, it can then transfer the acetyl group from AcAMP to the sulfhydryl group of CoA, forming the product AcCoA. The chain is Acetyl-coenzyme A synthetase from Vibrio vulnificus (strain CMCP6).